Here is a 104-residue protein sequence, read N- to C-terminus: Large ribosomal subunit protein uL24 (104 aa).

It belongs to the universal ribosomal protein uL24 family. Part of the 50S ribosomal subunit.

Its function is as follows. One of two assembly initiator proteins, it binds directly to the 5'-end of the 23S rRNA, where it nucleates assembly of the 50S subunit. In terms of biological role, one of the proteins that surrounds the polypeptide exit tunnel on the outside of the subunit. This chain is Large ribosomal subunit protein uL24, found in Clostridium perfringens (strain ATCC 13124 / DSM 756 / JCM 1290 / NCIMB 6125 / NCTC 8237 / Type A).